We begin with the raw amino-acid sequence, 446 residues long: C4-dicarboxylate transport protein (446 aa).

A run of 9 helical transmembrane segments spans residues 20 to 40 (HLYV…HFYP), 56 to 76 (LVKM…IAGM), 91 to 111 (IYFL…ANVV), 160 to 180 (GDIL…AGVG), 200 to 220 (LVHI…AFTI), 233 to 253 (FLIL…LGLV), 319 to 339 (IYMT…LSLG), 344 to 364 (LLLV…AGFI), and 367 to 387 (AATL…ILGI).

It belongs to the dicarboxylate/amino acid:cation symporter (DAACS) (TC 2.A.23) family.

It localises to the cell inner membrane. Its function is as follows. Responsible for the transport of dicarboxylates such as succinate, fumarate, and malate from the periplasm across the membrane. The sequence is that of C4-dicarboxylate transport protein from Azorhizobium caulinodans (strain ATCC 43989 / DSM 5975 / JCM 20966 / LMG 6465 / NBRC 14845 / NCIMB 13405 / ORS 571).